Reading from the N-terminus, the 65-residue chain is Cytochrome b-c1 complex subunit 9, mitochondrial (65 aa).

The chain crosses the membrane as a helical span at residues 14–34 (IYVATIFGGAFAFQGFFDVAV).

The protein belongs to the UQCR10/QCR9 family. Component of the ubiquinol-cytochrome c oxidoreductase (cytochrome b-c1 complex, complex III, CIII), a multisubunit enzyme composed of 10 subunits. The complex is composed of 3 respiratory subunits cytochrome b (COB), cytochrome c1 (CYT1) and Rieske protein (RIP1), 2 core protein subunits COR1 and QCR2, and 5 low-molecular weight protein subunits QCR6, QCR7, QCR8, QCR9 and QCR10. The complex exists as an obligatory dimer and forms supercomplexes (SCs) in the inner mitochondrial membrane with a monomer or a dimer of cytochrome c oxidase (complex IV, CIV), resulting in 2 different assemblies (supercomplexes III(2)IV and III(2)IV(2)).

The protein localises to the membrane. It is found in the mitochondrion inner membrane. In terms of biological role, component of the ubiquinol-cytochrome c oxidoreductase, a multisubunit transmembrane complex that is part of the mitochondrial electron transport chain which drives oxidative phosphorylation. The complex plays an important role in the uptake of multiple carbon sources present in different host niches. The sequence is that of Cytochrome b-c1 complex subunit 9, mitochondrial from Candida albicans (strain SC5314 / ATCC MYA-2876) (Yeast).